The following is a 519-amino-acid chain: T-complex protein 1 subunit gamma (519 aa).

The protein belongs to the TCP-1 chaperonin family. As to quaternary structure, component of the T-complex protein 1 (TCP1) complex.

Its subcellular location is the cytoplasm. Molecular chaperone; assists the folding of proteins upon ATP hydrolysis. This Encephalitozoon cuniculi (strain GB-M1) (Microsporidian parasite) protein is T-complex protein 1 subunit gamma (CCT3).